A 431-amino-acid polypeptide reads, in one-letter code: MASSLLEEEVHYGSSPLAMLTAACSKFGGSSPLRDSTTLGKAGTKKPYSVGSDLSASKTMGDAYPAPFTSTNGLLSPAGSPPAPTSGYANDYPPFSHSFPGPTGTQDPGLLVPKGHSSSDCLPSVYTSLDMTHPYGSWYKAGIHAGISPGPGNTPTPWWDMHPGGNWLGGGQGQGDGLQGTLPTGPAQPPLNPQLPTYPSDFAPLNPAPYPAPHLLQPGPQHVLPQDVYKPKAVGNSGQLEGSGGAKPPRGASTGGSGGYGGSGAGRSSCDCPNCQELERLGAAAAGLRKKPIHSCHIPGCGKVYGKASHLKAHLRWHTGERPFVCNWLFCGKRFTRSDELERHVRTHTREKKFTCLLCSKRFTRSDHLSKHQRTHGEPGPGPPPSGPKELGEGRSTGEEEASQTPRPSASPATPEKAPGGSPEQSNLLEI.

The tract at residues 30-56 (SSPLRDSTTLGKAGTKKPYSVGSDLSA) is disordered. N6-propionyllysine is present on residues Lys-41 and Lys-45. Residue Lys-58 forms a Glycyl lysine isopeptide (Lys-Gly) (interchain with G-Cter in ubiquitin) linkage. Disordered regions lie at residues 71-115 (TNGL…VPKG) and 154-260 (TPTP…SGGY). Residues 156 to 164 (TPWWDMHPG) carry the 9aaTAD motif. A compositionally biased stretch (gly residues) spans 166–178 (NWLGGGQGQGDGL). Lys-230 participates in a covalent cross-link: Glycyl lysine isopeptide (Lys-Gly) (interchain with G-Cter in ubiquitin). C2H2-type zinc fingers lie at residues 294–318 (HSCH…LRWH), 324–348 (FVCN…VRTH), and 354–376 (FTCL…QRTH). 2 positions are modified to N6-propionyllysine: Lys-361 and Lys-371. Residues 367-431 (DHLSKHQRTH…SPEQSNLLEI (65 aa)) form a disordered region. Residues 403–412 (SQTPRPSASP) are compositionally biased toward polar residues.

Belongs to the Sp1 C2H2-type zinc-finger protein family. In terms of assembly, interacts with RIOX1; the interaction is direct and inhibits transcription activator activity. In terms of processing, ubiquitination at leads to proteasomal degradation. SP7 is a short-live protein with an endogenous half-life of approximately 12 hours. Post-translationally, propionylated. Depropionylation at Lys-371 by SIRT7 activates transcription factor activity and positively regulates bone formation by osteoblasts. Restricted to bone-derived cell.

Its subcellular location is the nucleus. Functionally, transcriptional activator essential for osteoblast differentiation. Binds to SP1 and EKLF consensus sequences and to other G/C-rich sequences. The protein is Transcription factor Sp7 (SP7) of Homo sapiens (Human).